The primary structure comprises 212 residues: ER lumen protein-retaining receptor 2 (212 aa).

Residues Met1 to Phe4 lie on the Lumenal side of the membrane. A helical membrane pass occupies residues Arg5 to Trp24. Residues Lys25 to Ile32 lie on the Cytoplasmic side of the membrane. A helical membrane pass occupies residues Ser33–Phe52. Residues Arg47–Tyr48 form an interaction with the K-D-E-L motif on target proteins region. The Lumenal portion of the chain corresponds to Thr53–Leu58. A helical membrane pass occupies residues Tyr59 to Tyr79. Residues Met80 to Thr92 are Cytoplasmic-facing. A helical membrane pass occupies residues Phe93–Asn110. At His111 to Leu116 the chain is on the lumenal side. The chain crosses the membrane as a helical span at residues Glu117 to Leu135. The Cytoplasmic segment spans residues Phe136–Thr149. A helical membrane pass occupies residues His150 to Trp168. The tract at residues Arg159–Arg169 is interaction with the K-D-E-L motif on target proteins. At Arg169–Leu178 the chain is on the lumenal side. Residues Ile179 to Val199 traverse the membrane as a helical segment. At Thr200 to Ala212 the chain is on the cytoplasmic side. The segment at Lys204 to Lys207 is important for recycling of cargo proteins with the sequence motif K-D-E-L from the Golgi to the endoplasmic reticulum.

The protein belongs to the ERD2 family.

The protein localises to the endoplasmic reticulum membrane. The protein resides in the golgi apparatus membrane. It localises to the cytoplasmic vesicle. It is found in the COPI-coated vesicle membrane. Functionally, membrane receptor that binds the K-D-E-L sequence motif in the C-terminal part of endoplasmic reticulum resident proteins and maintains their localization in that compartment by participating to their vesicle-mediated recycling back from the Golgi. Binding is pH dependent, and is optimal at pH 5-5.4. The protein is ER lumen protein-retaining receptor 2 (KDELR2) of Gallus gallus (Chicken).